Consider the following 380-residue polypeptide: MRWANILLVAGLCRASLGQYNEEEDLAWLQYYMRQSRMSSYNYMPYYEDENSPYVYSYVPAPDTEAEPVPEAQQASSWQCPQECDCPPNFSSAMYCDTRNLRYLPFVPTRMKYVYFQNNQITAIQEGAFDNATELEWLALHNNQISSEKMGKRVFAKLKNLERLYMNNNNLTKMPSPLPRSLRELHLSYNQISKVPSNALEGLENLTALYLSHNYIFEMGASLKGLKSLILADLSYNHLRKVPDGLPMALEQLYLEYNYINAIPDDYFKVSPKLLYVRMSHNSLTNQGLSTNTFNSSSILELDLSYNRLQKIPRVSTNLENLYLQGNQINEFSISSFCTVVDVMNYSRLQVLRLDGNEIKRNAMPPDAPLCLRRATVIEI.

The N-terminal stretch at 1–18 is a signal peptide; that stretch reads MRWANILLVAGLCRASLG. Residues 71-109 form the LRRNT domain; sequence EAQQASSWQCPQECDCPPNFSSAMYCDTRNLRYLPFVPT. Asn-89 is a glycosylation site (N-linked (GlcNAc...) asparagine). LRR repeat units follow at residues 110 to 131, 134 to 147, 160 to 180, 181 to 202, 205 to 227, 228 to 248, 249 to 270, and 273 to 293; these read RMKY…AFDN, ELEW…QISS, NLER…PLPR, SLRE…ALEG, NLTA…KGLK, SLIL…GLPM, ALEQ…YFKV, and KLLY…STNT. Asn-131 carries N-linked (GlcNAc...) (keratan sulfate) asparagine glycosylation. Asn-170 carries an N-linked (GlcNAc...) (keratan sulfate) asparagine glycan. The N-linked (GlcNAc...) (keratan sulfate) asparagine glycan is linked to Asn-205. The N-linked (GlcNAc...) (keratan sulfate) asparagine glycan is linked to Asn-295. 2 LRR repeats span residues 298 to 317 and 318 to 339; these read SILE…RVST and NLEN…SFCT. A disulfide bridge links Cys-338 with Cys-371. Asn-345 carries an N-linked (GlcNAc...) asparagine glycan. The LRR 11 repeat unit spans residues 348 to 371; sequence RLQVLRLDGNEIKRNAMPPDAPLC.

It belongs to the small leucine-rich proteoglycan (SLRP) family. SLRP class II subfamily. In terms of assembly, binds to type I and type II collagen. Post-translationally, binds keratan sulfate chains.

The protein resides in the secreted. It localises to the extracellular space. The protein localises to the extracellular matrix. In terms of biological role, affects the rate of fibrils formation. May have a primary role in collagen fibrillogenesis. This is Fibromodulin (FMOD) from Gallus gallus (Chicken).